We begin with the raw amino-acid sequence, 203 residues long: RNA annealing protein YRA2 (203 aa).

Position 1 is an N-acetylmethionine (Met1). Disordered regions lie at residues 1 to 60 and 137 to 203; these read MDKA…REEP and QPQR…YMKG. Residues 11–20 are compositionally biased toward polar residues; it reads NSHTDSSSNH. Over residues 47–60 the composition is skewed to basic and acidic residues; the sequence is SRSKDRLYREREEP. Positions 64–138 constitute an RRM domain; the sequence is KRIRISKIPL…AKIEVEIYQP (75 aa). The segment covering 139-153 has biased composition (basic residues); sequence QRKHSRMNAHNRRKQ. A compositionally biased stretch (basic and acidic residues) spans 154–164; the sequence is TAQEHGRDRPG. The segment covering 165 to 180 has biased composition (basic residues); the sequence is SHYRQKPNRVSKKNKG.

This sequence belongs to the YRA1 family. In terms of assembly, associates with mRNPs. Interacts with YRA1.

The protein resides in the nucleus. Involved in export of poly(A) mRNAs from the nucleus. Recruited to the coding sequences as well as poly-A sites of active genes. The polypeptide is RNA annealing protein YRA2 (YRA2) (Saccharomyces cerevisiae (strain YJM789) (Baker's yeast)).